Here is a 203-residue protein sequence, read N- to C-terminus: Histidine biosynthesis bifunctional protein HisIE (203 aa).

Residues 1–114 (MLTEQQRREL…FGDTAHQWLF (114 aa)) form a phosphoribosyl-AMP cyclohydrolase region. The tract at residues 115-203 (LYQLEQLLAE…VIENLRKRHQ (89 aa)) is phosphoribosyl-ATP pyrophosphohydrolase.

In the N-terminal section; belongs to the PRA-CH family. This sequence in the C-terminal section; belongs to the PRA-PH family.

The protein localises to the cytoplasm. It carries out the reaction 1-(5-phospho-beta-D-ribosyl)-ATP + H2O = 1-(5-phospho-beta-D-ribosyl)-5'-AMP + diphosphate + H(+). The enzyme catalyses 1-(5-phospho-beta-D-ribosyl)-5'-AMP + H2O = 1-(5-phospho-beta-D-ribosyl)-5-[(5-phospho-beta-D-ribosylamino)methylideneamino]imidazole-4-carboxamide. It participates in amino-acid biosynthesis; L-histidine biosynthesis; L-histidine from 5-phospho-alpha-D-ribose 1-diphosphate: step 2/9. The protein operates within amino-acid biosynthesis; L-histidine biosynthesis; L-histidine from 5-phospho-alpha-D-ribose 1-diphosphate: step 3/9. This chain is Histidine biosynthesis bifunctional protein HisIE, found in Shigella sonnei (strain Ss046).